The following is a 1198-amino-acid chain: Rac guanine nucleotide exchange factor B (1198 aa).

The tract at residues 1–104 (MFSNFFGSSK…QHQGVITSLQ (104 aa)) is disordered. Low complexity predominate over residues 8-20 (SSKRNTIASSSSS). Positions 21-34 (SKKDKDNGKDESSK) are enriched in basic and acidic residues. Positions 35 to 58 (LKNSGSSTLPKPITNNESGNNFIT) are enriched in polar residues. Residues 59–97 (SPSVSSPLISPLSSSPSPLLSSSSNSIQSTSHQQQQQHQ) are compositionally biased toward low complexity. The Calponin-homology (CH) 1 domain maps to 126 to 232 (SSLEQTARKW…NIVVLGKHAS (107 aa)). Residues 260–284 (FGGNHNNNNNNNNNNNTSNGDLSPV) form a disordered region. The segment covering 263–275 (NHNNNNNNNNNNN) has biased composition (low complexity). 2 Calponin-homology (CH) domains span residues 341–449 (PELQ…NKMY) and 511–619 (PEDM…ENFD). The region spanning 632–846 (RRQKVIEEII…KRVADHVNES (215 aa)) is the DH domain. Residues 876–1026 (TYIREGFLEI…WMEDLRSCLQ (151 aa)) enclose the PH domain. Acidic residues predominate over residues 940-952 (GEACVDGDDDGGE). Disordered regions lie at residues 940–989 (GEAC…SNKS) and 1076–1198 (NNNN…IDNQ). 2 stretches are compositionally biased toward low complexity: residues 977 to 989 (NSNNNNNSNSNKS) and 1076 to 1118 (NNNN…NNND). Residues 1155–1167 (DETISDTESDDYE) show a composition bias toward acidic residues. Residues 1188–1198 (FSDTIKNIDNQ) are compositionally biased toward polar residues.

Binds to F-actin.

The protein localises to the late endosome. In terms of biological role, involved in the regulation of the late steps of the endocytic pathway. This Dictyostelium discoideum (Social amoeba) protein is Rac guanine nucleotide exchange factor B (gxcB).